A 104-amino-acid chain; its full sequence is MMLKPSIDTLLDKVPSKYSLVILEAKRAHELEAGAPATQEFKSVKSTLRALEEIESGNVVIHPDPEGKREAVRRRAEEERLRKEEEERKIKEQIAKEKEEGEKI.

The segment at Val60 to Ile104 is disordered. Residues Pro63–Ile104 are compositionally biased toward basic and acidic residues.

The protein belongs to the RNA polymerase subunit omega family. The RNAP catalytic core consists of 2 alpha, 1 beta, 1 beta' and 1 omega subunit. When a sigma factor is associated with the core the holoenzyme is formed, which can initiate transcription.

The catalysed reaction is RNA(n) + a ribonucleoside 5'-triphosphate = RNA(n+1) + diphosphate. Functionally, promotes RNA polymerase assembly. Latches the N- and C-terminal regions of the beta' subunit thereby facilitating its interaction with the beta and alpha subunits. The sequence is that of DNA-directed RNA polymerase subunit omega from Streptococcus sanguinis (strain SK36).